The chain runs to 119 residues: Large ribosomal subunit protein uL22 (119 aa).

It belongs to the universal ribosomal protein uL22 family. As to quaternary structure, part of the 50S ribosomal subunit.

This protein binds specifically to 23S rRNA; its binding is stimulated by other ribosomal proteins, e.g. L4, L17, and L20. It is important during the early stages of 50S assembly. It makes multiple contacts with different domains of the 23S rRNA in the assembled 50S subunit and ribosome. Its function is as follows. The globular domain of the protein is located near the polypeptide exit tunnel on the outside of the subunit, while an extended beta-hairpin is found that lines the wall of the exit tunnel in the center of the 70S ribosome. In Rhodopirellula baltica (strain DSM 10527 / NCIMB 13988 / SH1), this protein is Large ribosomal subunit protein uL22.